We begin with the raw amino-acid sequence, 601 residues long: Aspartate--tRNA(Asp/Asn) ligase (601 aa).

Glu173 contacts L-aspartate. The aspartate stretch occupies residues 197-200 (QLFK). Arg219 serves as a coordination point for L-aspartate. ATP-binding positions include 219–221 (RDE) and Gln228. His456 lines the L-aspartate pocket. Position 490 (Glu490) interacts with ATP. Arg497 serves as a coordination point for L-aspartate. 542–545 (GWDR) provides a ligand contact to ATP. Residues 566–601 (GGGYDPLTQAPAPITAEQRRESGVDAVPDDETAPQA) form a disordered region. Acidic residues predominate over residues 592-601 (VPDDETAPQA).

It belongs to the class-II aminoacyl-tRNA synthetase family. Type 1 subfamily. Homodimer.

It localises to the cytoplasm. The enzyme catalyses tRNA(Asx) + L-aspartate + ATP = L-aspartyl-tRNA(Asx) + AMP + diphosphate. Aspartyl-tRNA synthetase with relaxed tRNA specificity since it is able to aspartylate not only its cognate tRNA(Asp) but also tRNA(Asn). Reaction proceeds in two steps: L-aspartate is first activated by ATP to form Asp-AMP and then transferred to the acceptor end of tRNA(Asp/Asn). In Beutenbergia cavernae (strain ATCC BAA-8 / DSM 12333 / CCUG 43141 / JCM 11478 / NBRC 16432 / NCIMB 13614 / HKI 0122), this protein is Aspartate--tRNA(Asp/Asn) ligase.